Here is a 448-residue protein sequence, read N- to C-terminus: Glutamate--tRNA ligase (448 aa).

A 'HIGH' region motif is present at residues Pro-10–Asn-20. The 'KMSKS' region signature appears at Lys-214–Arg-218. Lys-217 contributes to the ATP binding site.

The protein belongs to the class-I aminoacyl-tRNA synthetase family. Glutamate--tRNA ligase type 1 subfamily. In terms of assembly, monomer.

It is found in the cytoplasm. It catalyses the reaction tRNA(Glu) + L-glutamate + ATP = L-glutamyl-tRNA(Glu) + AMP + diphosphate. Functionally, catalyzes the attachment of glutamate to tRNA(Glu) in a two-step reaction: glutamate is first activated by ATP to form Glu-AMP and then transferred to the acceptor end of tRNA(Glu). This is Glutamate--tRNA ligase from Phytoplasma australiense.